Consider the following 993-residue polypeptide: uncharacterized protein (993 aa).

A signal peptide spans 1-28; sequence MKLFPRSILITLVLSFALNLGIVTKIHA. 7 helical membrane-spanning segments follow: residues 331-351, 359-379, 392-412, 494-514, 521-541, 554-574, and 699-719; these read IVTAFLTLYVMFFGFKLLLAG, YINFILKMIFVTYFSIGINIT, MIQWAFPFLLDGINGLASWVM, MLVSLALSYPLLVISVAAFMV, MISIVILGILAPLFVPMFLFA, MISFLLQPMVVVTFMITMFSV, and IKNILLALVMACFTLYLMYNF. The interval 779–904 is disordered; sequence GQGGGASDLE…EKVDSTSKGT (126 aa). The segment covering 805–829 has biased composition (low complexity); the sequence is TSAPAVTTPTASSSVASSSPKTVSS. Residues 838-850 show a composition bias toward pro residues; it reads PPAPTEAVSPPPA. The span at 866–879 shows a compositional bias: basic and acidic residues; sequence IIRDNNQESKKEID.

It belongs to the TrbL/VirB6 family.

The protein resides in the cell membrane. This is an uncharacterized protein from Rickettsia conorii (strain ATCC VR-613 / Malish 7).